We begin with the raw amino-acid sequence, 705 residues long: MLKDLNKVRNIGIMAHIDAGKTTTTERILFYTGINRKVGETHDGGATTDWMEQEKERGITITSAAVTCFWDNNQVNIIDTPGHVDFTVEVERSLRVLDGAVAVFDGKEGVEPQSEQVWRQATKYDVPRICFVNKMDKLGADFYFTVGTIEDRLGAKPLVMQLPIGAEDNFDGVIDLLEMKALTWRGVTPIGTEATVEEIPAELADRAAEYREKLLETVAESDEELMEKYFGGEELSIAEIKAAIRKMVVNSEIYPVYCGTAYKNKGIQPLLDAVVDFLPSPLDLGETKGTDVKDPEKVLTRKPSDEEPLSALAFKIAAHPFFGKLTFVRLYSGKVEPGEQVLNSTKNKKERIGKLFQMHANKENPVEVAHAGNIYAFIGLKDTTTGDTLCDANAPIILESMDFPDPVIQVAIEPKTKSDQEKLGVAIQKLAEEDPTFTVHLDDESGQTVIGGMGELHLDVLVDRMKREFKVEANIGDPQVAYRETIRKPVESLSYTHKKQTGGSGQFAKVIITIEPYAPEADELEEGESAIYKFENAVTGGRVPREYIPSVDAGIQDAMQYGFLAGYPLVNVKATLEDGAYHDVDSSEMAFKLAGSQAFKEAVAKAKPVLLEPIMSVEITTPEEYMGEVIGDVNSRRGQIASMDDRAGAKLVKAKVPLSQMFGYVGDLRSKTQGRANYSMVFDSYAEVPANVAADVIAERNGTAS.

A tr-type G domain is found at 6 to 282; that stretch reads NKVRNIGIMA…AVVDFLPSPL (277 aa). Residues 15–22, 79–83, and 133–136 contribute to the GTP site; these read AHIDAGKT, DTPGH, and NKMD.

The protein belongs to the TRAFAC class translation factor GTPase superfamily. Classic translation factor GTPase family. EF-G/EF-2 subfamily.

The protein resides in the cytoplasm. Functionally, catalyzes the GTP-dependent ribosomal translocation step during translation elongation. During this step, the ribosome changes from the pre-translocational (PRE) to the post-translocational (POST) state as the newly formed A-site-bound peptidyl-tRNA and P-site-bound deacylated tRNA move to the P and E sites, respectively. Catalyzes the coordinated movement of the two tRNA molecules, the mRNA and conformational changes in the ribosome. This chain is Elongation factor G, found in Corynebacterium glutamicum (strain ATCC 13032 / DSM 20300 / JCM 1318 / BCRC 11384 / CCUG 27702 / LMG 3730 / NBRC 12168 / NCIMB 10025 / NRRL B-2784 / 534).